Here is a 268-residue protein sequence, read N- to C-terminus: MQREEKQLEASLDALLSQVADLKNSLGSFICKLENEYGRLTWPSVLDSFALLSGQLNTLNKVLKHEKTPLFRNQVIIPLVLSPDRDEDLMRQTEGRVPVFSHEVVPDHLRTKPDPEVEEQEKQLTTDAARIGADAAQKQIQSLNKMCSNLLEKISKEERESESGGLRPNKQTFNPTDTNALVAAVAFGKGLSNWRPSGSSGPGQAGQPGAGTILAGTSGLQQVQMAGAPSQQQPMLSGVQMAQAGQPGKMPSGIKTNIKSASMHPYQR.

Residues 1–28 adopt a coiled-coil conformation; the sequence is MQREEKQLEASLDALLSQVADLKNSLGS. Ser-82 carries the post-translational modification Phosphoserine. A coiled-coil region spans residues 133–163; sequence ADAAQKQIQSLNKMCSNLLEKISKEERESES. The interval 142-151 is interaction with the Elongin BC complex; that stretch reads SLNKMCSNLL. 2 disordered regions span residues 156–176 and 193–268; these read KEER…FNPT and NWRP…PYQR. A compositionally biased stretch (gly residues) spans 200–209; it reads SGPGQAGQPG. Residues 218-235 are compositionally biased toward polar residues; that stretch reads SGLQQVQMAGAPSQQQPM.

Belongs to the Mediator complex subunit 8 family. As to quaternary structure, component of the Mediator complex, which is composed of MED1, MED4, MED6, MED7, MED8, MED9, MED10, MED11, MED12, MED13, MED13L, MED14, MED15, MED16, MED17, MED18, MED19, MED20, MED21, MED22, MED23, MED24, MED25, MED26, MED27, MED29, MED30, MED31, CCNC, CDK8 and CDC2L6/CDK11. The MED12, MED13, CCNC and CDK8 subunits form a distinct module termed the CDK8 module. Mediator containing the CDK8 module is less active than Mediator lacking this module in supporting transcriptional activation. Individual preparations of the Mediator complex lacking one or more distinct subunits have been variously termed ARC, CRSP, DRIP, PC2, SMCC and TRAP. May be part of a multisubunit E3 ubiquitin-protein ligase complex with the elongin BC complex (ELOB and ELOC), CUL2 and RBX1.

It localises to the nucleus. It participates in protein modification; protein ubiquitination. Component of the Mediator complex, a coactivator involved in the regulated transcription of nearly all RNA polymerase II-dependent genes. Mediator functions as a bridge to convey information from gene-specific regulatory proteins to the basal RNA polymerase II transcription machinery. Mediator is recruited to promoters by direct interactions with regulatory proteins and serves as a scaffold for the assembly of a functional preinitiation complex with RNA polymerase II and the general transcription factors. May play a role as a target recruitment subunit in E3 ubiquitin-protein ligase complexes and thus in ubiquitination and subsequent proteasomal degradation of target proteins. This chain is Mediator of RNA polymerase II transcription subunit 8 (MED8), found in Homo sapiens (Human).